The sequence spans 341 residues: Geranylgeranyl transferase type-2 subunit beta (341 aa).

PFTB repeat units lie at residues 15–55 (KSKH…ITMN), 62–104 (QQDV…KIYD), 122–163 (RERL…SLLN), 170–211 (ADTA…AIMN), 223–264 (VKLI…SILK), and 271–313 (LKIL…SLID). Geranylgeranyl diphosphate is bound by residues 196–198 (HAA) and 243–255 (RPEK…YSWW). Residues Asp-249, Cys-251, and His-301 each contribute to the Zn(2+) site.

Belongs to the protein prenyltransferase subunit beta family. Heterodimer of an alpha and a beta subunit. Zn(2+) serves as cofactor.

The enzyme catalyses geranylgeranyl diphosphate + L-cysteinyl-[protein] = S-geranylgeranyl-L-cysteinyl-[protein] + diphosphate. Functionally, catalyzes the transfer of a geranyl-geranyl moiety from geranyl-geranyl pyrophosphate to proteins having the C-terminal -XCC or -XCXC, where both cysteines may become modified. Acts on YPT1 and SEC4. The chain is Geranylgeranyl transferase type-2 subunit beta (BET2) from Candida albicans (Yeast).